Here is a 360-residue protein sequence, read N- to C-terminus: MPRLLIAASGTGGHLFPALAVADRMPETWSVRWLGVPDRLERQLVPSRYPLFTVRAGGLQGRGLRKLKQLIQLLWSAWPVTRLIRKQECAVVFTTGGYIAAPAILAARLCRRPVVLHESNAIPGQVTRLFGRFCSRVALGLPQAADYLSGCRPEVTGTPVREDFLKPAACPDWVPAGDGPLLLVIGGSQGAVGLNRMVRAAAPALLAMGCRIVHLSGHVDPDQGQLEHPAYSERPFSEEIPALLQHADLAISRAGAGSLSELAVCGTPAVLVPFPQAADDHQSANAAAAAAVGAAVIVAQHGPNEPGLRRMLWNLLGPRLRGCDPAADPLRLLRQGMERLAVRDADRLLSQLLQDLAAEA.

UDP-N-acetyl-alpha-D-glucosamine is bound by residues 11-13 (TGG), asparagine 120, arginine 161, serine 188, and glutamine 282.

It belongs to the glycosyltransferase 28 family. MurG subfamily.

It localises to the cell inner membrane. The catalysed reaction is di-trans,octa-cis-undecaprenyl diphospho-N-acetyl-alpha-D-muramoyl-L-alanyl-D-glutamyl-meso-2,6-diaminopimeloyl-D-alanyl-D-alanine + UDP-N-acetyl-alpha-D-glucosamine = di-trans,octa-cis-undecaprenyl diphospho-[N-acetyl-alpha-D-glucosaminyl-(1-&gt;4)]-N-acetyl-alpha-D-muramoyl-L-alanyl-D-glutamyl-meso-2,6-diaminopimeloyl-D-alanyl-D-alanine + UDP + H(+). It participates in cell wall biogenesis; peptidoglycan biosynthesis. Cell wall formation. Catalyzes the transfer of a GlcNAc subunit on undecaprenyl-pyrophosphoryl-MurNAc-pentapeptide (lipid intermediate I) to form undecaprenyl-pyrophosphoryl-MurNAc-(pentapeptide)GlcNAc (lipid intermediate II). The chain is UDP-N-acetylglucosamine--N-acetylmuramyl-(pentapeptide) pyrophosphoryl-undecaprenol N-acetylglucosamine transferase from Synechococcus sp. (strain RCC307).